Consider the following 346-residue polypeptide: Tetraacyldisaccharide 4'-kinase (346 aa).

54 to 61 (TVGGAGKT) contributes to the ATP binding site.

It belongs to the LpxK family.

It carries out the reaction a lipid A disaccharide + ATP = a lipid IVA + ADP + H(+). Its pathway is glycolipid biosynthesis; lipid IV(A) biosynthesis; lipid IV(A) from (3R)-3-hydroxytetradecanoyl-[acyl-carrier-protein] and UDP-N-acetyl-alpha-D-glucosamine: step 6/6. Functionally, transfers the gamma-phosphate of ATP to the 4'-position of a tetraacyldisaccharide 1-phosphate intermediate (termed DS-1-P) to form tetraacyldisaccharide 1,4'-bis-phosphate (lipid IVA). This is Tetraacyldisaccharide 4'-kinase from Rhizobium etli (strain ATCC 51251 / DSM 11541 / JCM 21823 / NBRC 15573 / CFN 42).